The chain runs to 252 residues: Chitooligosaccharide deacetylase (252 aa).

His125 is a Mg(2+) binding site.

It belongs to the YdjC deacetylase family. ChbG subfamily. In terms of assembly, homodimer. Requires Mg(2+) as cofactor.

It is found in the cytoplasm. The enzyme catalyses N,N'-diacetylchitobiose + H2O = N-acetyl-beta-D-glucosaminyl-(1-&gt;4)-D-glucosamine + acetate. The catalysed reaction is diacetylchitobiose-6'-phosphate + H2O = N'-monoacetylchitobiose-6'-phosphate + acetate. Its pathway is glycan degradation; chitin degradation. Its function is as follows. Involved in the degradation of chitin. ChbG is essential for growth on the acetylated chitooligosaccharides chitobiose and chitotriose but is dispensable for growth on cellobiose and chitosan dimer, the deacetylated form of chitobiose. Deacetylation of chitobiose-6-P and chitotriose-6-P is necessary for both the activation of the chb promoter by the regulatory protein ChbR and the hydrolysis of phosphorylated beta-glucosides by the phospho-beta-glucosidase ChbF. Catalyzes the removal of only one acetyl group from chitobiose-6-P to yield monoacetylchitobiose-6-P, the inducer of ChbR and the substrate of ChbF. This chain is Chitooligosaccharide deacetylase, found in Escherichia coli O157:H7.